The primary structure comprises 309 residues: Homoserine O-succinyltransferase (309 aa).

Residue Cys142 is the Acyl-thioester intermediate of the active site. Positions 163 and 192 each coordinate substrate. The active-site Proton acceptor is the His235. Glu237 is a catalytic residue. Residue Arg249 coordinates substrate.

Belongs to the MetA family.

Its subcellular location is the cytoplasm. It catalyses the reaction L-homoserine + succinyl-CoA = O-succinyl-L-homoserine + CoA. The protein operates within amino-acid biosynthesis; L-methionine biosynthesis via de novo pathway; O-succinyl-L-homoserine from L-homoserine: step 1/1. In terms of biological role, transfers a succinyl group from succinyl-CoA to L-homoserine, forming succinyl-L-homoserine. This Proteus mirabilis (strain HI4320) protein is Homoserine O-succinyltransferase.